Reading from the N-terminus, the 265-residue chain is Ribosomal RNA small subunit methyltransferase A (265 aa).

S-adenosyl-L-methionine contacts are provided by H13, L15, G40, E61, D85, and N103.

The protein belongs to the class I-like SAM-binding methyltransferase superfamily. rRNA adenine N(6)-methyltransferase family. RsmA subfamily.

It localises to the cytoplasm. It catalyses the reaction adenosine(1518)/adenosine(1519) in 16S rRNA + 4 S-adenosyl-L-methionine = N(6)-dimethyladenosine(1518)/N(6)-dimethyladenosine(1519) in 16S rRNA + 4 S-adenosyl-L-homocysteine + 4 H(+). Its function is as follows. Specifically dimethylates two adjacent adenosines (A1518 and A1519) in the loop of a conserved hairpin near the 3'-end of 16S rRNA in the 30S particle. May play a critical role in biogenesis of 30S subunits. In Bordetella bronchiseptica (strain ATCC BAA-588 / NCTC 13252 / RB50) (Alcaligenes bronchisepticus), this protein is Ribosomal RNA small subunit methyltransferase A.